The primary structure comprises 439 residues: tRNA modification GTPase MnmE (439 aa).

(6S)-5-formyl-5,6,7,8-tetrahydrofolate is bound by residues arginine 26, glutamate 88, and arginine 127. Residues 220-367 (GARLALIGRP…LRDAIHTALI (148 aa)) form the TrmE-type G domain. Asparagine 230 contributes to the K(+) binding site. Residues 230-235 (NAGKSS), 249-255 (TPIPGTT), and 274-277 (DTAG) contribute to the GTP site. Residue serine 234 participates in Mg(2+) binding. K(+)-binding residues include threonine 249, isoleucine 251, and threonine 254. Threonine 255 serves as a coordination point for Mg(2+). Lysine 439 serves as a coordination point for (6S)-5-formyl-5,6,7,8-tetrahydrofolate.

Belongs to the TRAFAC class TrmE-Era-EngA-EngB-Septin-like GTPase superfamily. TrmE GTPase family. As to quaternary structure, homodimer. Heterotetramer of two MnmE and two MnmG subunits. It depends on K(+) as a cofactor.

Its subcellular location is the cytoplasm. Its function is as follows. Exhibits a very high intrinsic GTPase hydrolysis rate. Involved in the addition of a carboxymethylaminomethyl (cmnm) group at the wobble position (U34) of certain tRNAs, forming tRNA-cmnm(5)s(2)U34. The chain is tRNA modification GTPase MnmE from Deinococcus geothermalis (strain DSM 11300 / CIP 105573 / AG-3a).